The sequence spans 366 residues: MNSLANNGKLYLSLKKLNFPKEWSYPVNPNTSYIIDTFKEAVKCGIFLESNKKHFEYSYSILTVIGWFFPRYNYEQLMIASSVMQWIFVLDDFLERDHIDDEKQQYCVNKCEDILIQGRKSEYISNIADADLAPLDKYTLLLRDRLSKSTKDRVETFNIFIHYLREWFFSVIPLKKSKGESKSDSVHYDVYTFIRTVNVGLYFVIAINNVAVDLKIDGSFWMNPIWSRMTRNASRLFTIVNDCVSYAKEIDQECAGENCLYILQIKSNLPLQTVYNHLVDEFDQIVAKVQKDEILLLESFNYLPNEKIDGIKYLILSLKELLVGNYKWSLVSPRYIHKDSPFIETSRSDSSTIPYETILTPDIFWI.

Positions 91 to 96 (DDFLER) match the DDxx(x)D/E motif motif. The NDxxSxxxD/E motif signature appears at 241 to 249 (NDCVSYAKE).

It belongs to the terpene synthase family.

The catalysed reaction is (2E,6E)-farnesyl diphosphate = (1S,2S,4R)-beta-elemene + diphosphate. Terpene synthase that converts its substrate farnesyl diphosphate (FPP) into the sesquiterpenes bicycloelemene, beta-elemene and 2 yet unidentified sesquiterpenes. The polypeptide is Terpene synthase 4 (Dictyostelium purpureum (Slime mold)).